A 633-amino-acid chain; its full sequence is 1-deoxy-D-xylulose-5-phosphate synthase (633 aa).

The tract at residues 1-22 is disordered; that stretch reads MPTTFHEIPRKRPTTPLLDRAQ. Residues His87 and 128–130 each bind thiamine diphosphate; that span reads GHS. Asp159 contacts Mg(2+). Thiamine diphosphate contacts are provided by residues 160–161, Asn188, Phe295, and Glu378; that span reads GA. A Mg(2+)-binding site is contributed by Asn188.

Belongs to the transketolase family. DXPS subfamily. In terms of assembly, homodimer. Mg(2+) serves as cofactor. Thiamine diphosphate is required as a cofactor.

It catalyses the reaction D-glyceraldehyde 3-phosphate + pyruvate + H(+) = 1-deoxy-D-xylulose 5-phosphate + CO2. It participates in metabolic intermediate biosynthesis; 1-deoxy-D-xylulose 5-phosphate biosynthesis; 1-deoxy-D-xylulose 5-phosphate from D-glyceraldehyde 3-phosphate and pyruvate: step 1/1. Its function is as follows. Catalyzes the acyloin condensation reaction between C atoms 2 and 3 of pyruvate and glyceraldehyde 3-phosphate to yield 1-deoxy-D-xylulose-5-phosphate (DXP). In Pseudomonas fluorescens (strain ATCC BAA-477 / NRRL B-23932 / Pf-5), this protein is 1-deoxy-D-xylulose-5-phosphate synthase.